Here is a 226-residue protein sequence, read N- to C-terminus: MVKLILMRHGQSQWNLANLFTGWVDIPLSFKGIEEAIEAGKQIKNYPIDLIFTSSLIRAQMTAMLAMSVHTSGKVPVILHTGEGRLEEWASIYSSESQSQTIPVIRAWELNERMYGELQGINKEEMAKKYGAEQVHIWRRSFDVPPPNGESLQMTAARTIPYFENTIVPHLKEKKNIFIAAHGNSLRSIIMKLDGLTTDQVVKLELATGVPVIYDFNHDEYIKQQK.

Residues 8–15, 21–22, Arg-58, 112–115, Lys-123, 139–140, and 183–184 each bind substrate; these read RHGQSQWN, TG, ERMY, RR, and GN. His-9 acts as the Tele-phosphohistidine intermediate in catalysis. The active-site Proton donor/acceptor is Glu-112.

Belongs to the phosphoglycerate mutase family. BPG-dependent PGAM subfamily.

It carries out the reaction (2R)-2-phosphoglycerate = (2R)-3-phosphoglycerate. The protein operates within carbohydrate degradation; glycolysis; pyruvate from D-glyceraldehyde 3-phosphate: step 3/5. Catalyzes the interconversion of 2-phosphoglycerate and 3-phosphoglycerate. This is 2,3-bisphosphoglycerate-dependent phosphoglycerate mutase from Protochlamydia amoebophila (strain UWE25).